A 124-amino-acid polypeptide reads, in one-letter code: Small ribosomal subunit protein uS12c (124 aa).

Disordered stretches follow at residues 1–28 (MPTI…KSCP) and 104–124 (AAGV…KPKS). 2 stretches are compositionally biased toward basic residues: residues 11 to 20 (ERRKINKKTK) and 109 to 124 (DRRK…KPKS).

It belongs to the universal ribosomal protein uS12 family. As to quaternary structure, part of the 30S ribosomal subunit.

It localises to the plastid. The protein localises to the chloroplast. Its function is as follows. With S4 and S5 plays an important role in translational accuracy. Located at the interface of the 30S and 50S subunits. The protein is Small ribosomal subunit protein uS12c (rps12) of Porphyra purpurea (Red seaweed).